The sequence spans 362 residues: Heat-inducible transcription repressor HrcA (362 aa).

It belongs to the HrcA family.

Its function is as follows. Negative regulator of class I heat shock genes (grpE-dnaK-dnaJ and groELS operons). Prevents heat-shock induction of these operons. This chain is Heat-inducible transcription repressor HrcA, found in Rhodopseudomonas palustris (strain BisB18).